Reading from the N-terminus, the 1423-residue chain is Serum albumin SDS-1 (1423 aa).

An N-terminal signal peptide occupies residues 1 to 23 (MGKAMLKLCITLMVLVFSGTAES). A propeptide spanning residues 24–29 (KGVMRR) is cleaved from the precursor. Albumin domains follow at residues 29-230 (REDE…EDFK), 231-426 (HKLT…EFKS), 427-608 (EVEK…SDFK), 609-811 (MDVE…SQAR), 812-1031 (QEAL…HTIH), 1032-1226 (MEIR…AIEK), and 1227-1422 (VIKD…AIKS). Cu cation is bound at residue H36. Disulfide bonds link C42–C88, C87–C96, C109–C125, C124–C135, C167–C212, C211–C221, C244–C290, C289–C298, C311–C327, C326–C337, C363–C408, C407–C416, C439–C485, C484–C493, C506–C522, and C521–C532. Residue N490 is glycosylated (N-linked (GlcNAc...) asparagine). Residue N541 is glycosylated (N-linked (GlcNAc...) asparagine). Cystine bridges form between C556–C601, C622–C668, C667–C676, C689–C705, C704–C715, C747–C792, C791–C802, C825–C871, C870–C879, C892–C907, and C906–C947. N652 carries an N-linked (GlcNAc...) asparagine glycan. N754 carries N-linked (GlcNAc...) asparagine glycosylation. N-linked (GlcNAc...) asparagine glycans are attached at residues N908 and N911. The segment at 910–936 (SNTSTTTSTTTSTTTSTTTSTTTSTTS) is disordered. Repeat copies occupy residues 913–916 (STTT), 917–920 (STTT), 921–924 (STTT), 925–928 (STTT), 929–932 (STTT), 933–935 (STT), and 936–939 (STTT). The segment at 913–939 (STTTSTTTSTTTSTTTSTTTSTTSTTT) is 7 X 4 AA tandem repeats of S-T-T-T. N-linked (GlcNAc...) asparagine glycosylation occurs at N954. 8 disulfide bridges follow: C969/C1014, C1013/C1022, C1045/C1091, C1090/C1099, C1112/C1128, C1127/C1138, C1163/C1208, and C1207/C1216. A glycan (N-linked (GlcNAc...) asparagine) is linked at N1070. The N-linked (GlcNAc...) asparagine glycan is linked to N1236. 6 disulfides stabilise this stretch: C1239-C1285, C1284-C1291, C1304-C1320, C1319-C1330, C1359-C1404, and C1403-C1412.

The protein belongs to the ALB/AFP/VDB family. In terms of tissue distribution, plasma.

The protein localises to the secreted. Its function is as follows. Serum albumin, the main protein of plasma, has a good binding capacity for water, Ca(2+), Na(+), K(+), fatty acids, hormones, bilirubin and drugs. Its main function is the regulation of the colloidal osmotic pressure of blood. The chain is Serum albumin SDS-1 (SDS-1) from Petromyzon marinus (Sea lamprey).